The primary structure comprises 144 residues: Universal stress protein F (144 aa).

This sequence belongs to the universal stress protein A family. In terms of assembly, homodimer.

The sequence is that of Universal stress protein F (uspF) from Escherichia coli (strain K12).